Consider the following 349-residue polypeptide: Ribosomal RNA large subunit methyltransferase Cfr (349 aa).

Glutamate 89 functions as the Proton acceptor in the catalytic mechanism. The region spanning 96-331 (KAGWESFCIS…VTVRSQFGID (236 aa)) is the Radical SAM core domain. Cysteine 103 and cysteine 336 are joined by a disulfide. 3 residues coordinate [4Fe-4S] cluster: cysteine 110, cysteine 114, and cysteine 117. S-adenosyl-L-methionine-binding positions include 156–157 (GE), serine 187, 210–212 (SLH), and asparagine 291. Residue cysteine 336 is the S-methylcysteine intermediate of the active site.

This sequence belongs to the radical SAM superfamily. RlmN family. Cfr subfamily. It depends on [4Fe-4S] cluster as a cofactor.

Its subcellular location is the cytoplasm. It catalyses the reaction adenosine(2503) in 23S rRNA + 2 reduced [2Fe-2S]-[ferredoxin] + 2 S-adenosyl-L-methionine = 8-methyladenosine(2503) in 23S rRNA + 5'-deoxyadenosine + L-methionine + 2 oxidized [2Fe-2S]-[ferredoxin] + S-adenosyl-L-homocysteine. Its function is as follows. Specifically methylates position 8 of adenine 2503 in 23S rRNA. Confers resistance to some classes of antibiotics. The protein is Ribosomal RNA large subunit methyltransferase Cfr of Bacillus velezensis (strain DSM 23117 / BGSC 10A6 / LMG 26770 / FZB42) (Bacillus amyloliquefaciens subsp. plantarum).